Reading from the N-terminus, the 189-residue chain is Apolipoprotein D (189 aa).

The first 20 residues, 1–20 (MGMMLLLLSMLAGLVAEAEG), serve as a signal peptide directing secretion. Gln21 carries the pyrrolidone carboxylic acid modification. 2 disulfide bridges follow: Cys28-Cys134 and Cys61-Cys185. N-linked (GlcNAc...) asparagine glycans are attached at residues Asn65 and Asn98.

Belongs to the calycin superfamily. Lipocalin family. As to quaternary structure, homodimer.

Its subcellular location is the secreted. In terms of biological role, APOD occurs in the macromolecular complex with lecithin-transport and binding of bilin. Appears to be able to transport a variety of ligands in a number of different contexts. The protein is Apolipoprotein D (APOD) of Cavia porcellus (Guinea pig).